We begin with the raw amino-acid sequence, 485 residues long: Adenosylhomocysteinase (485 aa).

Positions 64, 139, and 205 each coordinate substrate. Position 206 to 208 (206 to 208) interacts with NAD(+); it reads TTT. Residues lysine 235 and aspartate 239 each contribute to the substrate site. NAD(+) is bound by residues asparagine 240, 269–274, glutamate 292, asparagine 327, 348–350, and asparagine 397; these read GYGDVG and IGH.

Belongs to the adenosylhomocysteinase family. The cofactor is NAD(+).

The enzyme catalyses S-adenosyl-L-homocysteine + H2O = L-homocysteine + adenosine. It participates in amino-acid biosynthesis; L-homocysteine biosynthesis; L-homocysteine from S-adenosyl-L-homocysteine: step 1/1. Functionally, adenosylhomocysteine is a competitive inhibitor of S-adenosyl-L-methionine-dependent methyl transferase reactions; therefore adenosylhomocysteinase may play a key role in the control of methylations via regulation of the intracellular concentration of adenosylhomocysteine. The polypeptide is Adenosylhomocysteinase (SAHH) (Solanum lycopersicum (Tomato)).